We begin with the raw amino-acid sequence, 493 residues long: Cytochrome P450 monooxygenase mfmF (493 aa).

The next 2 membrane-spanning stretches (helical) occupy residues 3-23 and 301-321; these read SLIP…RLFF and VLFA…FHLV. Heme is bound at residue cysteine 440.

Belongs to the cytochrome P450 family. It depends on heme as a cofactor.

The protein localises to the membrane. It functions in the pathway secondary metabolite biosynthesis; terpenoid biosynthesis. Functionally, cytochrome P450 monooxygenase; part of the gene cluster that mediates the biosynthesis of the phthalide-terpenoid hybrid 11'-O-desmethylfendlerol. Within the pathway, mfmF catalyzes C-3 hydroxylation of 5-hydroxy-4-(hydroxymethyl)-7-methoxy-6-methylphthalide to yield cyclopolic acid. The biosynthesis of 11'-O-desmethylfendlerol begins with the NR-PKS mfmB that forms 3,5-dimethylorsellinic acid (DMOA), which is then transformed into the phthalide 5,7-dihydroxy-4-(hydroxymethyl)-6-methylphthalide by the cytochrome P450 monooxygenase mfmA and the hydrolase mfmC. Subsequently, the methyltransferase mfmE catalyzes 7-O-methylation to yield 5-hydroxy-4-(hydroxymethyl)-7-methoxy-6-methylphthalide, which undergoes C-3 hydroxylation by the cytochrome P450 monooxygenase mfmF. The resultant cyclopolic acid (2,5-dihydroxy-4-(hydroxymethyl)-7-methoxy-6-methylphthalide) is then farnesylated by the DMATS-type prenyltransferase mfmD to afford 5-O-farnesylcyclopolic acid. Finally, the Pyr4-family terpene cyclase mfmH cyclizes the farnesyl moiety of 5-O-farnesylcyclopolic acid into a drimane-like structure, thus completing the biosynthesis of 11'-O-desmethylfendlerol. The polypeptide is Cytochrome P450 monooxygenase mfmF (Annulohypoxylon moriforme (Filamentous fungus)).